A 311-amino-acid polypeptide reads, in one-letter code: HPr kinase/phosphorylase (311 aa).

Catalysis depends on residues H139 and K160. 154–161 lines the ATP pocket; it reads GKSGIGKS. Mg(2+) is bound at residue S161. Residue D178 is the Proton acceptor; for phosphorylation activity. Proton donor; for dephosphorylation activity of the active site. The segment at 201 to 210 is important for the catalytic mechanism of both phosphorylation and dephosphorylation; that stretch reads MEIRGLGIIN. Position 202 (E202) interacts with Mg(2+). The active site involves R245. Positions 266-271 are important for the catalytic mechanism of dephosphorylation; it reads PISSGR.

The protein belongs to the HPrK/P family. As to quaternary structure, homohexamer. Mg(2+) is required as a cofactor.

It carries out the reaction [HPr protein]-L-serine + ATP = [HPr protein]-O-phospho-L-serine + ADP + H(+). The catalysed reaction is [HPr protein]-O-phospho-L-serine + phosphate + H(+) = [HPr protein]-L-serine + diphosphate. In terms of biological role, catalyzes the ATP- as well as the pyrophosphate-dependent phosphorylation of a specific serine residue in HPr, a phosphocarrier protein of the phosphoenolpyruvate-dependent sugar phosphotransferase system (PTS). HprK/P also catalyzes the pyrophosphate-producing, inorganic phosphate-dependent dephosphorylation (phosphorolysis) of seryl-phosphorylated HPr (P-Ser-HPr). The polypeptide is HPr kinase/phosphorylase (hprK) (Mycoplasma genitalium (strain ATCC 33530 / DSM 19775 / NCTC 10195 / G37) (Mycoplasmoides genitalium)).